A 60-amino-acid chain; its full sequence is Large ribosomal subunit protein uL30 (60 aa).

It belongs to the universal ribosomal protein uL30 family. In terms of assembly, part of the 50S ribosomal subunit.

The protein is Large ribosomal subunit protein uL30 of Streptococcus pneumoniae serotype 2 (strain D39 / NCTC 7466).